Consider the following 483-residue polypeptide: Glutamate--tRNA ligase (483 aa).

The 'HIGH' region signature appears at 11-21; it reads PSPTGHLHIGN. The short motif at 252–256 is the 'KMSKS' region element; the sequence is KLSKR. An ATP-binding site is contributed by Lys255.

This sequence belongs to the class-I aminoacyl-tRNA synthetase family. Glutamate--tRNA ligase type 1 subfamily. In terms of assembly, monomer.

It is found in the cytoplasm. It carries out the reaction tRNA(Glu) + L-glutamate + ATP = L-glutamyl-tRNA(Glu) + AMP + diphosphate. Its function is as follows. Catalyzes the attachment of glutamate to tRNA(Glu) in a two-step reaction: glutamate is first activated by ATP to form Glu-AMP and then transferred to the acceptor end of tRNA(Glu). The sequence is that of Glutamate--tRNA ligase from Bacillus velezensis (strain DSM 23117 / BGSC 10A6 / LMG 26770 / FZB42) (Bacillus amyloliquefaciens subsp. plantarum).